A 310-amino-acid chain; its full sequence is Cytosolic Fe-S cluster assembly factor Nubp1 homolog (310 aa).

The [4Fe-4S] cluster site is built by Cys-9, Cys-23, Cys-26, and Cys-32. Residue 63–70 coordinates ATP; the sequence is GKGGVGKS. 2 residues coordinate [4Fe-4S] cluster: Cys-240 and Cys-243.

This sequence belongs to the Mrp/NBP35 ATP-binding proteins family. NUBP1/NBP35 subfamily. As to quaternary structure, heterotetramer of 2 Nubp1 and 2 Nubp2 chains. The cofactor is [4Fe-4S] cluster.

It is found in the cytoplasm. Its function is as follows. Component of the cytosolic iron-sulfur (Fe/S) protein assembly (CIA) machinery. Required for maturation of extramitochondrial Fe-S proteins. The Nubp1-Nubp2 heterotetramer forms a Fe-S scaffold complex, mediating the de novo assembly of an Fe-S cluster and its transfer to target apoproteins. This chain is Cytosolic Fe-S cluster assembly factor Nubp1 homolog, found in Drosophila virilis (Fruit fly).